A 218-amino-acid polypeptide reads, in one-letter code: Cytochrome b6 (218 aa).

A helical transmembrane segment spans residues 35-55; it reads IFYCLGGITLVCFLIQFATGF. Cysteine 38 serves as a coordination point for heme c. Positions 89 and 103 each coordinate heme b. 3 consecutive transmembrane segments (helical) span residues 93-113, 119-139, and 189-209; these read ASMM…TGGF, LTWV…VTGY, and LHTF…FLMI. Heme b is bound by residues histidine 190 and histidine 205.

It belongs to the cytochrome b family. PetB subfamily. As to quaternary structure, the 4 large subunits of the cytochrome b6-f complex are cytochrome b6, subunit IV (17 kDa polypeptide, PetD), cytochrome f and the Rieske protein, while the 4 small subunits are PetG, PetL, PetM and PetN. The complex functions as a dimer. Heme b serves as cofactor. The cofactor is heme c.

Its subcellular location is the cellular thylakoid membrane. In terms of biological role, component of the cytochrome b6-f complex, which mediates electron transfer between photosystem II (PSII) and photosystem I (PSI), cyclic electron flow around PSI, and state transitions. The sequence is that of Cytochrome b6 from Synechococcus sp. (strain CC9311).